A 508-amino-acid polypeptide reads, in one-letter code: Enhancer of mRNA-decapping protein 3 (508 aa).

The region spanning 1 to 68 (MAADWLGSIV…ITELKILEIP (68 aa)) is the Sm domain. The interval 1-79 (MAADWLGSIV…PGGNQHFGDV (79 aa)) is required for P-body targeting and interaction with DCP1A. Residues 95–192 (ISQNGTGKLV…QMKNKDDECF (98 aa)) form a disordered region. Ser-131, Ser-138, Ser-140, and Ser-161 each carry phosphoserine. The interval 191–296 (CFGDDIEEIP…HKKLLSVAEK (106 aa)) is required for interaction with DDX6. A DFDF domain is found at 192–228 (FGDDIEEIPDTDFDFEGNLALFDKAAVFEEIGTYERR). In terms of domain architecture, YjeF N-terminal spans 283-487 (SYEQHKKLLS…DIGIPQQVFQ (205 aa)).

Belongs to the EDC3 family. Homodimer (via YjeF N-terminal domain). Forms a complex with DCP1A, DCP2, DDX6 and EDC4/HEDLS, within this complex directly interacts with DCP1A and DDX6. Interacts with ZFP36.

Its subcellular location is the cytoplasm. It is found in the P-body. Binds single-stranded RNA. Involved in the process of mRNA degradation and in the positive regulation of mRNA decapping. This is Enhancer of mRNA-decapping protein 3 (EDC3) from Macaca fascicularis (Crab-eating macaque).